Reading from the N-terminus, the 631-residue chain is MSATKLTRREQRAQAQHFIDTLEGTAFPNSKRIYITGTQPGVRVPMREIQLSPTLIGGSKEQPQYEENEAIPVYDTSGPYGDPQIAINVQQGLAKLRQPWIDARGDTEELTVRSSDYTKARLADDGLDELRFSGVLTPKRAKAGRRVTQLHYARQGIITPEMEFIAIRENMGRERIRSEVLRHQHPGMSFGARLPENITAEFVRDEVAAGRAIIPANINHPESEPMIIGRNFLVKVNANIGNSAVTSSIEEEVEKLVWSTRWGADTVMDLSTGRYIHETREWILRNSPVPIGTVPIYQALEKVNGIAEDLTWEAFRDTLLEQAEQGVDYFTIHAGVLLRYVPMTAKRLTGIVSRGGSIMAKWCLSHHQENFLYQHFREICEICAAYDVSLSLGDGLRPGSIQDANDEAQFAELHTLGELTKIAWEYDVQVMIEGPGHVPMQMIRRNMTEELEHCHEAPFYTLGPLTTDIAPGYDHFTSGIGAAMIGWFGCAMLCYVTPKEHLGLPNKEDVKQGLITYKIAAHAADLAKGHPGAQIRDNAMSKARFEFRWEDQFNLALDPFTARAYHDETLPQESGKVAHFCSMCGPKFCSMKISQEVRDYAATQTIEMGIADMSENFRARGGEIYLRKEEA.

Residues Asn239, Met268, Tyr297, His333, 353–355 (SRG), 394–397 (DGLR), and Glu433 each bind substrate. Position 437 (His437) interacts with Zn(2+). Residue Tyr460 coordinates substrate. Zn(2+) is bound at residue His501. The [4Fe-4S] cluster site is built by Cys581, Cys584, and Cys589.

Belongs to the ThiC family. In terms of assembly, homodimer. [4Fe-4S] cluster is required as a cofactor.

It catalyses the reaction 5-amino-1-(5-phospho-beta-D-ribosyl)imidazole + S-adenosyl-L-methionine = 4-amino-2-methyl-5-(phosphooxymethyl)pyrimidine + CO + 5'-deoxyadenosine + formate + L-methionine + 3 H(+). It functions in the pathway cofactor biosynthesis; thiamine diphosphate biosynthesis. Its function is as follows. Catalyzes the synthesis of the hydroxymethylpyrimidine phosphate (HMP-P) moiety of thiamine from aminoimidazole ribotide (AIR) in a radical S-adenosyl-L-methionine (SAM)-dependent reaction. In Escherichia coli O157:H7, this protein is Phosphomethylpyrimidine synthase.